The chain runs to 952 residues: Bifunctional ent-kaurene synthase (952 aa).

Positions 328–331 match the DXDD B-type cyclization motif motif; that stretch reads DVDD. The Mg(2+) site is built by aspartate 668, glutamate 672, asparagine 848, aspartate 849, serine 852, and aspartate 856. The DEXXE A-type cyclization motif motif lies at 668 to 672; sequence DEYME.

This sequence belongs to the terpene synthase family. Mg(2+) is required as a cofactor.

It carries out the reaction ent-copalyl diphosphate = ent-kaur-16-ene + diphosphate. The enzyme catalyses (2E,6E,10E)-geranylgeranyl diphosphate = ent-copalyl diphosphate. It participates in plant hormone biosynthesis; gibberellin biosynthesis. Bifunctional ent-kaurene synthase; part of the gene cluster that mediates the biosynthesis of gibberellins (GAs), diterpenoids that may provide a selective advantage during infection of the preferred host plant, rice. Gibberellins (GAs) are diterpenoids and are synthesized via the mevalonate pathway. Biosynthesis of the major metabolite GA3 (gibberellic acid) from geranylgeranyl diphosphate (GGPP) requires 13 steps. The GGPP produced by the geranylgeranyl diphosphate synthase GGS2 is converted to ent-kaurene via ent-copalyldiphosphate in a two-step cyclization reaction performed by the bifunctional ent-copalyl diphosphate synthase/ent-kaurene synthase enzyme (CPS/KS). Ent-Kaurene is metabolized to GAs by a series of oxidation reactions catalyzed by cytochrome P450 monooxygenases. Cytochrome P450 monooxygenase P450-4 is an ent-kaurene oxidase that catalyzes the three oxidation steps between ent-kaurene and ent-kaurenoic acid. The highly multifunctional cytochrome P450 monooxygenase P450-1 then catalyzes four steps involving oxidation at two carbon atoms, in the main pathway from ent-kaurenoic acid to GA14 via GA12-aldehyde as well as producing kaurenolides and fujenoic acids as by-products. The cytochrome P450 monooxygenase P450-2 then converts GA14 to GA4 by removal of C-20. GA4 is further converted to GA7 by the GA4 desaturase DES via 1,2-desaturation before cytochrome P450 monooxygenase P450-3, a 13-hydroxylase, hydroxylates GA7 to GA3, the final product of the GA-biosynthetic pathway. This is Bifunctional ent-kaurene synthase from Gibberella fujikuroi (strain CBS 195.34 / IMI 58289 / NRRL A-6831) (Bakanae and foot rot disease fungus).